Reading from the N-terminus, the 123-residue chain is Small ribosomal subunit protein uS12cz/uS12cy (123 aa).

This sequence belongs to the universal ribosomal protein uS12 family. Part of the 30S ribosomal subunit.

The protein localises to the plastid. It localises to the chloroplast. Its function is as follows. With S4 and S5 plays an important role in translational accuracy. Located at the interface of the 30S and 50S subunits. This Angiopteris evecta (Mule's foot fern) protein is Small ribosomal subunit protein uS12cz/uS12cy (rps12-A).